A 331-amino-acid polypeptide reads, in one-letter code: Thiamine-monophosphate kinase (331 aa).

Aspartate 43, threonine 59, threonine 60, and aspartate 61 together coordinate Mg(2+). Histidine 68 is a binding site for substrate. Mg(2+) contacts are provided by aspartate 90, aspartate 138, and aspartate 231. 137–138 (GD) contributes to the ATP binding site. Serine 233 contacts ATP. Mg(2+) is bound at residue aspartate 234. 2 residues coordinate substrate: glutamate 284 and tryptophan 328.

The protein belongs to the thiamine-monophosphate kinase family.

The catalysed reaction is thiamine phosphate + ATP = thiamine diphosphate + ADP. It participates in cofactor biosynthesis; thiamine diphosphate biosynthesis; thiamine diphosphate from thiamine phosphate: step 1/1. Functionally, catalyzes the ATP-dependent phosphorylation of thiamine-monophosphate (TMP) to form thiamine-pyrophosphate (TPP), the active form of vitamin B1. The polypeptide is Thiamine-monophosphate kinase (Corynebacterium glutamicum (strain ATCC 13032 / DSM 20300 / JCM 1318 / BCRC 11384 / CCUG 27702 / LMG 3730 / NBRC 12168 / NCIMB 10025 / NRRL B-2784 / 534)).